We begin with the raw amino-acid sequence, 82 residues long: Cytochrome b559 subunit alpha (82 aa).

A helical transmembrane segment spans residues 22–36 (VIHAITLPSIFLAGF). H24 serves as a coordination point for heme.

It belongs to the PsbE/PsbF family. As to quaternary structure, heterodimer of an alpha subunit and a beta subunit. PSII is composed of 1 copy each of membrane proteins PsbA, PsbB, PsbC, PsbD, PsbE, PsbF, PsbH, PsbI, PsbJ, PsbK, PsbL, PsbM, PsbT, PsbX, PsbY, PsbZ, Psb30/Ycf12, peripheral proteins PsbO, CyanoQ (PsbQ), PsbU, PsbV and a large number of cofactors. It forms dimeric complexes. Heme b is required as a cofactor.

It localises to the cellular thylakoid membrane. Functionally, this b-type cytochrome is tightly associated with the reaction center of photosystem II (PSII). PSII is a light-driven water:plastoquinone oxidoreductase that uses light energy to abstract electrons from H(2)O, generating O(2) and a proton gradient subsequently used for ATP formation. It consists of a core antenna complex that captures photons, and an electron transfer chain that converts photonic excitation into a charge separation. The polypeptide is Cytochrome b559 subunit alpha (Synechococcus sp. (strain CC9311)).